The chain runs to 120 residues: Glycine cleavage system H protein (120 aa).

The 83-residue stretch at V17–K99 folds into the Lipoyl-binding domain. Position 58 is an N6-lipoyllysine (K58).

This sequence belongs to the GcvH family. The glycine cleavage system is composed of four proteins: P, T, L and H. Requires (R)-lipoate as cofactor.

The glycine cleavage system catalyzes the degradation of glycine. The H protein shuttles the methylamine group of glycine from the P protein to the T protein. The chain is Glycine cleavage system H protein from Methylorubrum extorquens (strain CM4 / NCIMB 13688) (Methylobacterium extorquens).